The following is a 210-amino-acid chain: Germin-like protein subfamily 3 member 4 (210 aa).

An N-terminal signal peptide occupies residues M1 to G18. Cysteines 27 and 44 form a disulfide. The region spanning T58–K190 is the Cupin type-1 domain. The N-linked (GlcNAc...) asparagine glycan is linked to N73. Mn(2+) is bound by residues H106, H108, E113, and H152.

It belongs to the germin family. In terms of assembly, oligomer (believed to be a pentamer but probably hexamer).

The protein localises to the secreted. Its subcellular location is the extracellular space. It is found in the apoplast. Its function is as follows. May play a role in plant defense. Probably has no oxalate oxidase activity even if the active site is conserved. This is Germin-like protein subfamily 3 member 4 from Arabidopsis thaliana (Mouse-ear cress).